Reading from the N-terminus, the 213-residue chain is Peroxynitrite isomerase (213 aa).

Residues 1 to 10 (MGADATGDTA) show a composition bias toward low complexity. Positions 1-26 (MGADATGDTAARGDRAAHGDTASGGA) are disordered. Residues 51 to 57 (GTWRGEG) carry the GXWXGXG motif. Histidine 203 is a binding site for heme b.

Belongs to the nitrobindin family. Homodimer. Requires heme b as cofactor.

It carries out the reaction peroxynitrite = nitrate. It participates in nitrogen metabolism. Functionally, heme-binding protein able to scavenge peroxynitrite and to protect free L-tyrosine against peroxynitrite-mediated nitration, by acting as a peroxynitrite isomerase that converts peroxynitrite to nitrate. Therefore, this protein likely plays a role in peroxynitrite sensing and in the detoxification of reactive nitrogen and oxygen species (RNS and ROS, respectively). Is able to bind nitric oxide (NO) in vitro, but may act as a sensor of peroxynitrite levels in vivo. The protein is Peroxynitrite isomerase of Parafrankia sp. (strain EAN1pec).